A 267-amino-acid polypeptide reads, in one-letter code: 27 kDa primary mesenchyme-specific spicule protein (267 aa).

The N-terminal stretch at 1 to 16 (MKLLAILLVLPALCFG) is a signal peptide. Residues 20–64 (EGPGMGPGMGPGMGPGMGPGMGPGMGPGMGPGMGPGQGQGQGQGQ) are 11 X 4 AA tandem repeats of G-[PQ]-G-[MQ]. 11 tandem repeats follow at residues 21–24 (GPGM), 25–28 (GPGM), 29–32 (GPGM), 33–36 (GPGM), 37–40 (GPGM), 41–44 (GPGM), 45–48 (GPGM), 49–52 (GPGM), 53–56 (GPGQ), 57–60 (GQGQ), and 61–64 (GQGQ). Residues 44-68 (MGPGMGPGMGPGQGQGQGQGQGQVG) are disordered. A C-type lectin domain is found at 79 to 220 (IGQQCFKMMS…CDEPMYFACS (142 aa)). 2 disulfides stabilise this stretch: cysteine 100-cysteine 219 and cysteine 197-cysteine 211.

Expressed specifically in the micromere/primary mesenchyme cells (PMC) lineage. Produced uniformly and exclusively by PMCs through the early prism stage and this specificity is further restricted during skeletogenesis to a subpopulation of PMCs associated with the growing tips of the spicules.

It is found in the secreted. May play a role in the regulation or execution of skeletal growth. This Strongylocentrotus purpuratus (Purple sea urchin) protein is 27 kDa primary mesenchyme-specific spicule protein (PM27).